The chain runs to 489 residues: N-succinylglutamate 5-semialdehyde dehydrogenase (489 aa).

Residue 223–228 (GSSRTG) coordinates NAD(+). Active-site residues include Glu-246 and Cys-280.

This sequence belongs to the aldehyde dehydrogenase family. AstD subfamily.

It catalyses the reaction N-succinyl-L-glutamate 5-semialdehyde + NAD(+) + H2O = N-succinyl-L-glutamate + NADH + 2 H(+). It participates in amino-acid degradation; L-arginine degradation via AST pathway; L-glutamate and succinate from L-arginine: step 4/5. In terms of biological role, catalyzes the NAD-dependent reduction of succinylglutamate semialdehyde into succinylglutamate. The polypeptide is N-succinylglutamate 5-semialdehyde dehydrogenase (Aeromonas salmonicida (strain A449)).